A 371-amino-acid chain; its full sequence is Alanine dehydrogenase (371 aa).

Substrate contacts are provided by Arg-15 and Lys-74. Residue His-95 is the Proton donor/acceptor of the active site. NAD(+) contacts are provided by residues Ser-133, 177–178, Asp-197, Ser-219, 238–239, 266–269, Arg-279, and 298–301; these read QA, VL, IAID, and VANM. Asp-269 functions as the Proton donor/acceptor in the catalytic mechanism.

Belongs to the AlaDH/PNT family. In terms of assembly, homohexamer. Trimer of dimer.

It catalyses the reaction L-alanine + NAD(+) + H2O = pyruvate + NH4(+) + NADH + H(+). Its pathway is amino-acid degradation; L-alanine degradation via dehydrogenase pathway; NH(3) and pyruvate from L-alanine: step 1/1. Catalyzes the reversible reductive amination of pyruvate to L-alanine. May play a role in cell wall synthesis as L-alanine is an important constituent of the peptidoglycan layer. In Staphylococcus saprophyticus subsp. saprophyticus (strain ATCC 15305 / DSM 20229 / NCIMB 8711 / NCTC 7292 / S-41), this protein is Alanine dehydrogenase (ald).